A 211-amino-acid chain; its full sequence is Phosphoglycerate mutase (211 aa).

Residues 14 to 21 (RHGESEWN) and 27 to 28 (TG) each bind substrate. The Tele-phosphohistidine intermediate role is filled by His-15. At Thr-37 the chain carries Phosphothreonine. Ser-62 is subject to Phosphoserine. Substrate is bound by residues Arg-66, 93–96 (ERYY), Lys-104, 120–121 (RR), and 164–165 (GN). The Proton donor/acceptor role is filled by Glu-93. Position 96 is a phosphotyrosine (Tyr-96). A Phosphoserine modification is found at Ser-166.

Belongs to the phosphoglycerate mutase family. BPG-dependent PGAM subfamily. Monomer. The N-terminus is blocked.

The enzyme catalyses (2R)-2-phosphoglycerate = (2R)-3-phosphoglycerate. Its pathway is carbohydrate degradation; glycolysis; pyruvate from D-glyceraldehyde 3-phosphate: step 3/5. The chain is Phosphoglycerate mutase (gpm1) from Schizosaccharomyces pombe (strain 972 / ATCC 24843) (Fission yeast).